The chain runs to 593 residues: High affinity cGMP-specific 3',5'-cyclic phosphodiesterase 9A (593 aa).

The interval 87-141 (SAGVEDKRTTSRGQSAERPLRDRRVVGLEQPRREGAFESGQVEPRPREPQGCYQE) is disordered. The span at 104-122 (RPLRDRRVVGLEQPRREGA) shows a compositional bias: basic and acidic residues. The PDEase domain maps to 236 to 557 (PRRDVPTYPK…DRYEELKRID (322 aa)). His-312 functions as the Proton donor in the catalytic mechanism. Residue 312-316 (HNFRH) participates in 3',5'-cyclic GMP binding. His-316, His-352, and Asp-353 together coordinate Zn(2+). 3',5'-cyclic GMP is bound at residue Asp-353. Asp-353 serves as a coordination point for Mg(2+). Residue Ser-379 is modified to Phosphoserine. 3',5'-cyclic GMP is bound by residues Asp-462, Tyr-484, and 512–513 (AQ). Asp-462 is a Zn(2+) binding site. Positions 564 to 593 (QKKTDSLTSGATEKSRERSRDVKNSEGDCA) are disordered. Residues 576–593 (EKSRERSRDVKNSEGDCA) are compositionally biased toward basic and acidic residues.

This sequence belongs to the cyclic nucleotide phosphodiesterase family. PDE9 subfamily. Homodimer. Zn(2+) is required as a cofactor. Requires Mg(2+) as cofactor. In terms of tissue distribution, expressed in all tissues examined (testis, brain, small intestine, skeletal muscle, heart, lung, thymus, spleen, placenta, kidney, liver, pancreas, ovary and prostate) except blood. Highest levels in brain, heart, kidney, spleen, prostate and colon. Isoform PDE9A12 is found in prostate. In brain, present in the cortex, cerebellum, and subiculum (at protein level). In heart, primarily localizes to myocytes.

It localises to the cell projection. Its subcellular location is the ruffle membrane. The protein resides in the cytoplasm. The protein localises to the perinuclear region. It is found in the golgi apparatus. It localises to the endoplasmic reticulum. Its subcellular location is the cell membrane. The protein resides in the sarcolemma. The enzyme catalyses 3',5'-cyclic GMP + H2O = GMP + H(+). The protein operates within purine metabolism; 3',5'-cyclic GMP degradation; GMP from 3',5'-cyclic GMP: step 1/1. Its activity is regulated as follows. Inhibited by zaprinast; inhibitor is however not specific to PDE9A. Specifically inhibited by BAY-73-6691 (1-(2-chlorophenyl)-6-((2R)-3,3,3- trifluoro-2-methylpropyl)-1,5-dihydro-4H-pyrazolo(3,4-d)pyrimidine-4-one). BAY-73-9961 has two enantiomers, (R) and (S), due to the presence of a chiral center, and both forms vary in their pattern of interaction. Specifically inhibited by PF-4181366 (4H-Pyrazolo[3,4-d]pyrimidin-4-one, 1- cyclopentyl-1,5-dihydro-6-[(3S,4S)-4-methyl- 1-(6-quinoxalinylmethyl)-3-pyrrolidinyl]-one). Specifically inhibited by PF-4449613 ((R)-6-(1-(3-phenoxyazetidin-1-yl)ethyl)-1-(tetrahydro-2H-pyran-4-yl)-1H-pyrazolo[3,4-d]pyrimidin- 4(5H)-one). Specifically inhibited by inhibitor 28 (2-((1-(2-Chlorophenyl)-4-hydroxy-1Hpyrazolo[ 3,4-d]pyrimidin-6-yl)amino)-N-(4- methoxyphenyl)propanamide): inhibitor forms a hydrogen bond with Tyr-484 and Gln-513. Specifically inhibited by 1-Cyclopentyl-6-[(1r)-1-(3-phenoxyazetidin- 1-Yl)ethyl]-1,5-dihydro-4h-pyrazolo[3,4-D] pyrimidin-4-one: inhibitor forms a hydrogen bond with Tyr-484 and Gln-513. Specifically hydrolyzes the second messenger cGMP, which is a key regulator of many important physiological processes. Highly specific: compared to other members of the cyclic nucleotide phosphodiesterase family, has the highest affinity and selectivity for cGMP. Specifically regulates natriuretic-peptide-dependent cGMP signaling in heart, acting as a regulator of cardiac hypertrophy in myocytes and muscle. Does not regulate nitric oxide-dependent cGMP in heart. Additional experiments are required to confirm whether its ability to hydrolyze natriuretic-peptide-dependent cGMP is specific to heart or is a general feature of the protein. In brain, involved in cognitive function, such as learning and long-term memory. The sequence is that of High affinity cGMP-specific 3',5'-cyclic phosphodiesterase 9A from Homo sapiens (Human).